We begin with the raw amino-acid sequence, 322 residues long: MLIDSYGRVVDYLRVSVTERCNFRCRYCMPDEPFKDAGHSNVLSYEEMFEFIKICLDNGVKKIRLTGGEPLVRKGVENFVAMINGYKSGLDLAMTTNGYFLAKKAQALKDAGLKRINISLDTLDKTKAHFIARKDVLDNVIEGIETACNLGFGVKINTVALKSVNDNELIYLMDFAKEKGAQIRYIEFMENSHASSELQGLNKDQILDIISKKYNIKEITKSPNSPSSLFELEDGYKFGIIDPHKHDFCSTCNRLRLSAEGLLIPCLYYEDGKSIREAMRAGDIKKACEILNQVLADKPEKNKWENDGKGEISSRAFYQTGG.

The region spanning 5 to 217 (SYGRVVDYLR…DIISKKYNIK (213 aa)) is the Radical SAM core domain. Arg-14 contacts GTP. The [4Fe-4S] cluster site is built by Cys-21 and Cys-25. Tyr-27 is an S-adenosyl-L-methionine binding site. Residue Cys-28 participates in [4Fe-4S] cluster binding. Residue Arg-64 participates in GTP binding. Gly-68 provides a ligand contact to S-adenosyl-L-methionine. Thr-95 contacts GTP. Ser-119 contacts S-adenosyl-L-methionine. Lys-155 is a binding site for GTP. Met-189 contacts S-adenosyl-L-methionine. Residues Cys-249 and Cys-252 each contribute to the [4Fe-4S] cluster site. Position 254–256 (254–256 (RLR)) interacts with GTP. Position 266 (Cys-266) interacts with [4Fe-4S] cluster.

The protein belongs to the radical SAM superfamily. MoaA family. As to quaternary structure, monomer and homodimer. The cofactor is [4Fe-4S] cluster.

The catalysed reaction is GTP + AH2 + S-adenosyl-L-methionine = (8S)-3',8-cyclo-7,8-dihydroguanosine 5'-triphosphate + 5'-deoxyadenosine + L-methionine + A + H(+). It participates in cofactor biosynthesis; molybdopterin biosynthesis. In terms of biological role, catalyzes the cyclization of GTP to (8S)-3',8-cyclo-7,8-dihydroguanosine 5'-triphosphate. The protein is GTP 3',8-cyclase of Campylobacter fetus subsp. fetus (strain 82-40).